Reading from the N-terminus, the 164-residue chain is CDP-archaeol synthase (164 aa).

A run of 4 helical transmembrane segments spans residues 3–23 (LTVFFLLIWPPYVANGSAVFA), 55–75 (AIGIATGTVLGYFPNLVYHVI), 77–97 (VFDAFVLSASAVLGDLIGAFI), and 122–142 (FLVYSLFREIPVVYVLAAVVI).

Belongs to the CDP-archaeol synthase family. Mg(2+) serves as cofactor.

It localises to the cell membrane. It carries out the reaction 2,3-bis-O-(geranylgeranyl)-sn-glycerol 1-phosphate + CTP + H(+) = CDP-2,3-bis-O-(geranylgeranyl)-sn-glycerol + diphosphate. It participates in membrane lipid metabolism; glycerophospholipid metabolism. In terms of biological role, catalyzes the formation of CDP-2,3-bis-(O-geranylgeranyl)-sn-glycerol (CDP-archaeol) from 2,3-bis-(O-geranylgeranyl)-sn-glycerol 1-phosphate (DGGGP) and CTP. This reaction is the third ether-bond-formation step in the biosynthesis of archaeal membrane lipids. The polypeptide is CDP-archaeol synthase (Pyrobaculum aerophilum (strain ATCC 51768 / DSM 7523 / JCM 9630 / CIP 104966 / NBRC 100827 / IM2)).